The sequence spans 87 residues: Cytochrome c6 (87 aa).

Residues Cys-14, Cys-17, His-18, and Met-58 each coordinate heme c.

Belongs to the cytochrome c family. PetJ subfamily. In terms of assembly, monomer. Post-translationally, binds 1 heme c group covalently per subunit.

It localises to the cellular thylakoid lumen. Functions as an electron carrier between membrane-bound cytochrome b6-f and photosystem I in oxygenic photosynthesis. In Aphanizomenon flos-aquae, this protein is Cytochrome c6 (petJ).